A 315-amino-acid polypeptide reads, in one-letter code: Dihydroorotate dehydrogenase (fumarate) (315 aa).

Residues lysine 46, asparagine 70–leucine 74, and asparagine 130 each bind substrate. Lysine 46–serine 47 is an FMN binding site. Asparagine 130 is an FMN binding site. The active-site Nucleophile is cysteine 133. The FMN site is built by lysine 167 and isoleucine 195. Asparagine 196 to serine 197 lines the substrate pocket. FMN-binding positions include glycine 224, glycine 252–glycine 253, and glycine 274–threonine 275.

This sequence belongs to the dihydroorotate dehydrogenase family. Type 1 subfamily. Homodimer. The cofactor is FMN.

The protein resides in the cytoplasm. The enzyme catalyses (S)-dihydroorotate + fumarate = orotate + succinate. The protein operates within pyrimidine metabolism; UMP biosynthesis via de novo pathway. Catalyzes the conversion of dihydroorotate to orotate with fumarate as the electron acceptor. The protein is Dihydroorotate dehydrogenase (fumarate) (URA1) of Kluyveromyces lactis (strain ATCC 8585 / CBS 2359 / DSM 70799 / NBRC 1267 / NRRL Y-1140 / WM37) (Yeast).